We begin with the raw amino-acid sequence, 195 residues long: Putative EGF-like and EMI domain-containing protein 1 (195 aa).

One can recognise an EGF-like domain in the interval 86-97; sequence CTCKSGYQGNRC.

In Homo sapiens (Human), this protein is Putative EGF-like and EMI domain-containing protein 1 (EGFEM1P).